Here is a 689-residue protein sequence, read N- to C-terminus: FACT complex subunit ssrp1-B (689 aa).

Disordered regions lie at residues 434–565 and 592–689; these read DNKS…KRAT and KAGA…GESD. Acidic residues predominate over residues 461–477; it reads EQDDDSDDESTDEDYDL. Composition is skewed to basic and acidic residues over residues 478-491, 523-532, 538-563, and 601-628; these read DKDM…KDSS, IEPKKKESKE, EKKE…EPKR, and SADD…EYKK. Positions 561-627 form a DNA-binding region, HMG box; sequence PKRATTAYII…RYEAEMKEYK (67 aa). Polar residues predominate over residues 638 to 650; it reads GPSTKKSSDQSPG.

This sequence belongs to the SSRP1 family. In terms of assembly, component of the FACT complex, a stable heterodimer of hmg-3 and spt-16. The FACT complex may also include hmg-4 instead of hmg-3. Expressed in the germline.

The protein resides in the nucleus. It localises to the chromosome. Component of the FACT complex, a general chromatin factor that acts to reorganize nucleosomes. The FACT complex is involved in multiple processes that require DNA as a template such as mRNA elongation, DNA replication and DNA repair. During transcription elongation the FACT complex acts as a histone chaperone that both destabilizes and restores nucleosomal structure. It facilitates the passage of RNA polymerase II and transcription by promoting the dissociation of one histone H2A-H2B dimer from the nucleosome, then subsequently promotes the reestablishment of the nucleosome following the passage of RNA polymerase II. Binds specifically to double-stranded DNA. In embryos, may function redundantly with hmg-4 to promote cell cycle progression and development of the anterior pharynx. In the germline, acts non-redundantly with hmg-4 to play a role in oocyte development. The sequence is that of FACT complex subunit ssrp1-B from Caenorhabditis elegans.